Here is a 424-residue protein sequence, read N- to C-terminus: MKGRVRIRGIYATALTSIFSSLSYEIVQQSVEIAERFMREVNNLPADITIKDFEYDRGKIIVMGNGTIEEDLHDVFKYSFHWKSPIKLYSVIEADESCTYGNFKVEPCLEEGIVIKPPYDGKIVLSETKAVSKYAMVWRGKGVTTFSEHINNEEERLRLLTLSSPLNRKGYNVKWRSNAKYATLNELKEDLERLVLRYENREFRDQGEDFYLITLSLPDKLHLDEVRKSIVNTVKYHHLLKLSYNREVDSLEKDKEGSPVKLLEALISDFMKIEHIKADGKAIYLRGGKVIEKEVNNDGYRITLRREINGNGVLDGIGKRIENGDYDIVEYNSDKWYQIHRYYSGIDNSLKGIYINISTPPELLKGKIRYLDLEIDIAIRDSEIIVLDEDELNKKSIYMYSSLVNKAKEVANYLIDCIQQNKLI.

The protein belongs to the FAU-1 family.

Its function is as follows. Probable RNase involved in rRNA stability through maturation and/or degradation of precursor rRNAs. Binds to RNA in loop regions with AU-rich sequences. The chain is Probable ribonuclease FAU-1 from Saccharolobus islandicus (strain Y.G.57.14 / Yellowstone #1) (Sulfolobus islandicus).